The chain runs to 226 residues: 2-dehydro-3-deoxy-phosphogluconate aldolase (226 aa).

Glutamate 57 serves as the catalytic Proton acceptor. Pyruvate contacts are provided by arginine 61, threonine 85, and lysine 145. Lysine 145 serves as the catalytic Schiff-base intermediate with substrate.

It belongs to the KHG/KDPG aldolase family. Homotrimer.

It carries out the reaction 2-dehydro-3-deoxy-6-phospho-D-gluconate = D-glyceraldehyde 3-phosphate + pyruvate. It functions in the pathway carbohydrate acid metabolism; 2-dehydro-3-deoxy-D-gluconate degradation; D-glyceraldehyde 3-phosphate and pyruvate from 2-dehydro-3-deoxy-D-gluconate: step 2/2. Involved in the degradation of glucose via the Entner-Doudoroff pathway. Catalyzes the reversible, stereospecific retro-aldol cleavage of 2-keto-3-deoxy-6-phosphogluconate (KDPG) to pyruvate and D-glyceraldehyde-3-phosphate. This is 2-dehydro-3-deoxy-phosphogluconate aldolase from Pseudomonas putida (Arthrobacter siderocapsulatus).